Reading from the N-terminus, the 185-residue chain is Putative tyrosine-protein phosphatase OCA1 (185 aa).

Positions 18 to 178 (NFCPVEKQLY…TVEIGSGKGS (161 aa)) constitute a Tyrosine-protein phosphatase domain. Catalysis depends on C116, which acts as the Phosphocysteine intermediate.

The protein belongs to the protein-tyrosine phosphatase family.

The protein resides in the cytoplasm. The enzyme catalyses O-phospho-L-tyrosyl-[protein] + H2O = L-tyrosyl-[protein] + phosphate. In terms of biological role, putative tyrosine-protein phosphatase required for protection against superoxide stress. This Meyerozyma guilliermondii (strain ATCC 6260 / CBS 566 / DSM 6381 / JCM 1539 / NBRC 10279 / NRRL Y-324) (Yeast) protein is Putative tyrosine-protein phosphatase OCA1 (OCA1).